We begin with the raw amino-acid sequence, 233 residues long: Phosphonates import ATP-binding protein PhnC 1 (233 aa).

An ABC transporter domain is found at 2–227 (LSVSGLTKRY…PAAALDREDI (226 aa)). 34–41 (GRSGAGKT) provides a ligand contact to ATP.

The protein belongs to the ABC transporter superfamily. Phosphonates importer (TC 3.A.1.9.1) family. As to quaternary structure, the complex is composed of two ATP-binding proteins (PhnC), two transmembrane proteins (PhnE) and a solute-binding protein (PhnD).

Its subcellular location is the cell membrane. The catalysed reaction is phosphonate(out) + ATP + H2O = phosphonate(in) + ADP + phosphate + H(+). In terms of biological role, part of the ABC transporter complex PhnCDE involved in phosphonates import. Responsible for energy coupling to the transport system. In Natronomonas pharaonis (strain ATCC 35678 / DSM 2160 / CIP 103997 / JCM 8858 / NBRC 14720 / NCIMB 2260 / Gabara) (Halobacterium pharaonis), this protein is Phosphonates import ATP-binding protein PhnC 1.